The chain runs to 215 residues: LexA repressor (215 aa).

Positions Arg28–Arg48 form a DNA-binding region, H-T-H motif. Active-site for autocatalytic cleavage activity residues include Ser133 and Lys170.

It belongs to the peptidase S24 family. As to quaternary structure, homodimer.

It catalyses the reaction Hydrolysis of Ala-|-Gly bond in repressor LexA.. Its function is as follows. Represses a number of genes involved in the response to DNA damage (SOS response), including recA and lexA. In the presence of single-stranded DNA, RecA interacts with LexA causing an autocatalytic cleavage which disrupts the DNA-binding part of LexA, leading to derepression of the SOS regulon and eventually DNA repair. This Burkholderia ambifaria (strain MC40-6) protein is LexA repressor.